We begin with the raw amino-acid sequence, 136 residues long: Large ribosomal subunit protein uL16 (136 aa).

Belongs to the universal ribosomal protein uL16 family. Part of the 50S ribosomal subunit.

Functionally, binds 23S rRNA and is also seen to make contacts with the A and possibly P site tRNAs. This chain is Large ribosomal subunit protein uL16, found in Wigglesworthia glossinidia brevipalpis.